Here is a 94-residue protein sequence, read N- to C-terminus: Putative regulatory protein LEPBI_I0950 (94 aa).

Belongs to the RemA family.

This chain is Putative regulatory protein LEPBI_I0950, found in Leptospira biflexa serovar Patoc (strain Patoc 1 / ATCC 23582 / Paris).